We begin with the raw amino-acid sequence, 572 residues long: Transmembrane glycoprotein NMB (572 aa).

The signal sequence occupies residues 1-22; the sequence is MECLYYFLGFLLLAARLPLDAA. Topologically, residues 23–498 are extracellular; that stretch reads KRFHDVLGNE…DPASPLRMAN (476 aa). Positions 64-66 match the Cell attachment site motif; the sequence is RGD. 10 N-linked (GlcNAc...) asparagine glycosylation sites follow: asparagine 93, asparagine 134, asparagine 146, asparagine 200, asparagine 249, asparagine 275, asparagine 296, asparagine 300, asparagine 306, and asparagine 312. The PKD domain maps to 240-327; it reads VTMFQKNDRN…AAPGPCPPPP (88 aa). The tract at residues 320–362 is disordered; sequence PGPCPPPPPPPRPSKPTPSLATTLKSYDSNTPGPAGDNPLELS. A compositionally biased stretch (pro residues) spans 321–335; it reads GPCPPPPPPPRPSKP. Polar residues predominate over residues 338 to 351; the sequence is SLATTLKSYDSNTP. Residues asparagine 459 and asparagine 467 are each glycosylated (N-linked (GlcNAc...) asparagine). The helical transmembrane segment at 499–519 threads the bilayer; it reads SALISVGCLAIFVTVISLLVY. The Cytoplasmic segment spans residues 520–572; that stretch reads KKHKEYNPIENSPGNVVRSKGLSVFLNRAKAVFFPGNQEKDPLLKNQEFKGVS. Serine 542 carries the phosphoserine modification.

Belongs to the PMEL/NMB family. Widely expressed, but very low expression, if any, in the brain. Expressed in the epidermis with higher levels in melanocytes compared with keratinocytes and Langerhans cells (at protein level). Expressed in peripheral blood, but not bone marrow mononuclear cells. Expressed in tissue macrophages, including liver Kuppfer cells and lung alveolar macrophages, in podocytes and in some cells of the ciliary body of the eye (at protein level). May be overexpressed in various cancers, including melanoma and glioblastoma multiforme.

Its subcellular location is the cell membrane. It is found in the melanosome membrane. The protein localises to the early endosome membrane. Its function is as follows. Could be a melanogenic enzyme. This Homo sapiens (Human) protein is Transmembrane glycoprotein NMB (GPNMB).